Here is a 659-residue protein sequence, read N- to C-terminus: MAKSEGRKSASQDTSENGMENPGLELMEVGNLEQGKTLEEVTQGHSLKDGLGHSSLWRRILQPFTKARSFYQRHAGLFKKILLGLLCLAYAAYLLAACILNFRRALALFVITCLVIFILACHFLKKFFAKKSIRCLKPLKNTRLRLWLKRVFMGAAVVGLILWLALDTAQRPEQLISFAGICMFILILFACSKHHSAVSWRTVFWGLGLQFVFGILVIRTEPGFNAFQWLGDQIQIFLAYTVEGSSFVFGDTLVQSVFAFQSLPIIIFFGCVMSILYYLGLVQWVIQKIAWFLQITMGTTAAETLAVAGNIFVGMTEAPLLIRPYLADMTLSEIHAVMTGGFATIAGTVLGAFISFGIDASSLISASVMAAPCALALSKLVYPEVEESKFKSKEGVKLPRGEERNILEAASNGATDAIALVANVAANLIAFLAVLAFINSTLSWLGEMVDIHGLTFQVICSYVLRPMVFMMGVQWADCPLVAEIVGVKFFINEFVAYQQLSQYKNKRLSGVEEWINGEKQWISVKAEIIATFSLCGFANLTSIGITLGGLTSMVPQRKSDLCKLVVRALFTGACVSFISACMAGILYVPRGAETDCVSFLNTNFTNRTYETYVCCRELFQSTLLNGTNMPSFSGPWQDKESSLRNLAKCCDLYTSTVCA.

The span at 1-10 shows a compositional bias: basic and acidic residues; sequence MAKSEGRKSA. The segment at 1–22 is disordered; that stretch reads MAKSEGRKSASQDTSENGMENP. Residue Ser-46 is modified to Phosphoserine. The next 14 helical transmembrane spans lie at 81–101, 105–124, 149–167, 173–193, 201–221, 234–254, 261–281, 296–315, 337–356, 363–382, 424–444, 455–475, 530–550, and 568–588; these read ILLGLLCLAYAAYLLAACILN, ALALFVITCLVIFILACHFL, KRVFMGAAVVGLILWLALD, EQLISFAGICMFILILFACSK, RTVFWGLGLQFVFGILVIRTE, IQIFLAYTVEGSSFVFGDTLV, QSLPIIIFFGCVMSILYYLGL, TMGTTAAETLAVAGNIFVGM, VMTGGFATIAGTVLGAFISF, LISASVMAAPCALALSKLVY, VAANLIAFLAVLAFINSTLSW, TFQVICSYVLRPMVFMMGVQW, ATFSLCGFANLTSIGITLGGL, and ALFTGACVSFISACMAGILYV.

This sequence belongs to the concentrative nucleoside transporter (CNT) (TC 2.A.41) family. As to expression, expressed in liver (in bile canalicular membrane vesicles (CMV) but not in sinusoidal vesicles), jejunum, spleen and heart. Also expressed in brain and skeletal muscle. Not expressed in kidney, muscle and lung.

The protein resides in the membrane. Its subcellular location is the apicolateral cell membrane. It carries out the reaction adenosine(out) + Na(+)(out) = adenosine(in) + Na(+)(in). The catalysed reaction is inosine(out) + Na(+)(out) = inosine(in) + Na(+)(in). The enzyme catalyses guanosine(out) + Na(+)(out) = guanosine(in) + Na(+)(in). It catalyses the reaction uridine(out) + Na(+)(out) = uridine(in) + Na(+)(in). With respect to regulation, inhibited by formycin B, partially inhibited by purine analog ara-A. Its function is as follows. Sodium-dependent and purine-selective. Exhibits the transport characteristics of the nucleoside transport system cif or N1 subtype (N1/cif) (selective for purine nucleosides and uridine). Accepts purine, analogs of purine nucleosides and uridine, and exhibits high affinity for adenosine. May contribute to regulate the transport of organic compounds in testes across the blood-testis-barrier. The protein is Sodium/nucleoside cotransporter 2 (Slc28a2) of Rattus norvegicus (Rat).